Reading from the N-terminus, the 303-residue chain is Shikimate kinase 1, chloroplastic (303 aa).

A chloroplast-targeting transit peptide spans 1-66 (MEAAITQRIQ…QRRAVSPAVS (66 aa)). 109–116 (GMMGSGKT) is a binding site for ATP. Thr116 contributes to the Mg(2+) binding site. Residues Asp134, Arg159, and Gly181 each coordinate substrate. Position 220 (Arg220) interacts with ATP.

It belongs to the shikimate kinase family. In terms of assembly, homodimer. Requires Mg(2+) as cofactor.

It localises to the plastid. It is found in the chloroplast. It catalyses the reaction shikimate + ATP = 3-phosphoshikimate + ADP + H(+). It functions in the pathway metabolic intermediate biosynthesis; chorismate biosynthesis; chorismate from D-erythrose 4-phosphate and phosphoenolpyruvate: step 5/7. Functionally, catalyzes the specific phosphorylation of the 3-hydroxyl group of shikimic acid using ATP as a cosubstrate. The protein is Shikimate kinase 1, chloroplastic (SK1) of Arabidopsis thaliana (Mouse-ear cress).